We begin with the raw amino-acid sequence, 97 residues long: Pyrin domain-containing protein 2 (97 aa).

One can recognise a Pyrin domain in the interval 1–94; it reads MASSAELDFN…SGRADEHCVM (94 aa).

In terms of assembly, interacts with PYCARD/ASC (via pyrin domain). Interacts with NLRP2 (via pyrin domain). As to expression, predominantly expressed in peripheral blood. Weakly expressed in testis.

The protein resides in the cytoplasm. Its subcellular location is the nucleus. Functionally, may play a role in innate immunity by disrupting the interaction between PYCARD and NLRP3, thereby regulating the NLRP3 inflammasome. May also inhibit NF-kappa-B signaling distally by affecting the nuclear accumulation of RELA. This Homo sapiens (Human) protein is Pyrin domain-containing protein 2.